The chain runs to 131 residues: Ribosome-binding factor A (131 aa).

Belongs to the RbfA family. As to quaternary structure, monomer. Binds 30S ribosomal subunits, but not 50S ribosomal subunits or 70S ribosomes.

It localises to the cytoplasm. In terms of biological role, one of several proteins that assist in the late maturation steps of the functional core of the 30S ribosomal subunit. Associates with free 30S ribosomal subunits (but not with 30S subunits that are part of 70S ribosomes or polysomes). Required for efficient processing of 16S rRNA. May interact with the 5'-terminal helix region of 16S rRNA. The chain is Ribosome-binding factor A from Gloeothece citriformis (strain PCC 7424) (Cyanothece sp. (strain PCC 7424)).